Reading from the N-terminus, the 2102-residue chain is Mediator of RNA polymerase II transcription subunit 13-like (2102 aa).

Disordered stretches follow at residues 304–335 (SYAGAPHNQLVHGDTGISSVTLTPPTSPEEAQ), 432–487 (QRAC…QPSL), 514–587 (VTSS…LDPL), 689–758 (SSAV…TTSL), 776–819 (NSDE…DLHQ), and 947–1034 (SVVE…SSVE). Pro residues predominate over residues 439–450 (GHPPSAGQPPQP). The segment covering 455–467 (KMAEKLEKGDKQQ) has biased composition (basic and acidic residues). A compositionally biased stretch (acidic residues) spans 693–714 (CDEDPEQESDPYAFEEGDEEFN). 2 stretches are compositionally biased toward basic and acidic residues: residues 715–737 (FSDKDKKSGPEREAGKKAKREDG) and 794–804 (AEEKFGGKEPK). Residues 947-974 (SVVEQEQSCTPQTHNTFMSNSAPPSNSG) show a composition bias toward polar residues. Residues 979–990 (PSPATPRISAPT) are compositionally biased toward low complexity. Over residues 1015–1029 (SDLNSPASTPSTCRP) the composition is skewed to polar residues. Short sequence motifs (LXXLL motif) lie at residues 1165–1169 (LMLLL) and 1254–1258 (LRMLL). Disordered stretches follow at residues 1451-1574 (LTQR…DGDS) and 1948-1983 (NSPTTSPVHSPGSHYHHGGDGSKGQGTDRMESHDES). Composition is skewed to low complexity over residues 1458 to 1467 (SSSQTSSSSS), 1476 to 1502 (TPTTNSNSNTNTNTTPTSTSTSSSSSS), and 1522 to 1538 (GAQGLQSSQQSGGQSAG). The span at 1542–1552 (DATSATSQPQV) shows a compositional bias: polar residues. Over residues 1973–1983 (GTDRMESHDES) the composition is skewed to basic and acidic residues.

Belongs to the Mediator complex subunit 13 family. In terms of assembly, component of the Mediator complex.

It is found in the nucleus. Its function is as follows. Component of the Mediator complex, a coactivator involved in regulated gene transcription of nearly all RNA polymerase II-dependent genes. Mediator functions as a bridge to convey information from gene-specific regulatory proteins to the basal RNA polymerase II transcription machinery. Mediator is recruited to promoters by direct interactions with regulatory proteins and serves as a scaffold for the assembly of a functional preinitiation complex with RNA polymerase II and the general transcription factors. The sequence is that of Mediator of RNA polymerase II transcription subunit 13-like from Danio rerio (Zebrafish).